Reading from the N-terminus, the 307-residue chain is Cilia-and flagella-associated protein 96 (307 aa).

Disordered regions lie at residues 73–102 (YSDPFKQRRQHRMQQSKKNLGKPFLPSSGE) and 218–279 (HSQK…GPKT).

Belongs to the CFAP96 family.

It is found in the cytoplasm. It localises to the cytoskeleton. The protein localises to the microtubule organizing center. Its subcellular location is the centrosome. This chain is Cilia-and flagella-associated protein 96 (cfap96.L), found in Xenopus laevis (African clawed frog).